The primary structure comprises 300 residues: D-alanine--D-alanine ligase (300 aa).

An ATP-grasp domain is found at 99 to 293; it reads KKILKYANIN…FAELLNSIVK (195 aa). 126-181 contacts ATP; the sequence is IEKIGYPVFVKPNSGGSSVATNLVKDKEGIKEAVELALKYDKEVMIENYTKGEEIT. Residues aspartate 248, glutamate 260, and asparagine 262 each coordinate Mg(2+).

The protein belongs to the D-alanine--D-alanine ligase family. Mg(2+) is required as a cofactor. Mn(2+) serves as cofactor.

Its subcellular location is the cytoplasm. It catalyses the reaction 2 D-alanine + ATP = D-alanyl-D-alanine + ADP + phosphate + H(+). It functions in the pathway cell wall biogenesis; peptidoglycan biosynthesis. Functionally, cell wall formation. The sequence is that of D-alanine--D-alanine ligase from Clostridium botulinum (strain Langeland / NCTC 10281 / Type F).